We begin with the raw amino-acid sequence, 121 residues long: Small ribosomal subunit protein bS6 (121 aa).

Belongs to the bacterial ribosomal protein bS6 family.

In terms of biological role, binds together with bS18 to 16S ribosomal RNA. This Rickettsia canadensis (strain McKiel) protein is Small ribosomal subunit protein bS6.